Here is a 661-residue protein sequence, read N- to C-terminus: MASAGKPALDDSRRGTGSPKIKARENAKDTLCRNITIYGRCRYEDKGCAFNHDPHKVNSSYQSDSKKRFNVDSPSFTPSLLSSNGSSPTSTPATTKKMTTISPKAANAAPFQPRSVVSRSNASTPGLRQDTVTPDWTVAEVQEFVPQGFDNSHLATLQGNGNGPITSTSPFDPFVTTSTPLSAGGAVGPVQPNPYSHDTAAALGGAAFFPGAAGFQQPVQYHLYAPIGPHSQNTLGYQRNVHDLFLPNDFREELQKKAAATLQTLPNTQLPAQIDYFHSLVPLDLNHQKNATIFGFPSWVYKAQSSKDGNFYALRRLEGFRLTNEKAIRSVQAWKRVCNGSVVTVHDAFTSRSFQDSSLIFVTDYHPLSKTLAEQHLGAGQQRFQGRQNVHIPEQILWGYMTQIANALKAIHSNGLAARVIDASKILLTGKNRIRLNACAIMDVVQFDSQRTVTDLQRQDLVNFGQLIVTLGANSPTVMHNPTKAMEHFTRAYSPQLKNSVFWLLNGMQKDQDRNIDIFITGISSQLMSTFDSALHLDDQLTSDLSRELENGRLVRLMTKLNFVNERPEYEHDRQWSENGERYFLKIFRDYVFHQVDVQGDPVVDLGHVISCLNKLDAGTEEKITLISRDEQSCFIVSYKELKKALESSFQALMKPARRMH.

Disordered regions lie at residues 1-26 (MASA…AREN) and 53-130 (DPHK…LRQD). A C3H1-type zinc finger spans residues 26–55 (NAKDTLCRNITIYGRCRYEDKGCAFNHDPH). The span at 75–102 (SFTPSLLSSNGSSPTSTPATTKKMTTIS) shows a compositional bias: low complexity. Over residues 115-130 (SVVSRSNASTPGLRQD) the composition is skewed to polar residues. Positions 263–524 (QTLPNTQLPA…NIDIFITGIS (262 aa)) are pseudokinase domain. Residues R315, 364–371 (DYHPLSKT), and 424–425 (SK) each bind ATP. A coiled-coil region spans residues 525-563 (SQLMSTFDSALHLDDQLTSDLSRELENGRLVRLMTKLNF). Positions 564–661 (VNERPEYEHD…ALMKPARRMH (98 aa)) are knob domain.

The protein belongs to the protein kinase superfamily. PAN3 family. In terms of assembly, homodimer. Forms a heterotrimer with a catalytic subunit pan2 to form the poly(A)-nuclease (PAN) deadenylation complex. Interacts (via PAM-2 motif) with poly(A)-binding protein pab1 (via PABC domain), conferring substrate specificity of the enzyme complex.

It is found in the cytoplasm. Regulatory subunit of the poly(A)-nuclease (PAN) deadenylation complex, one of two cytoplasmic mRNA deadenylases involved in mRNA turnover. PAN specifically shortens poly(A) tails of RNA and the activity is stimulated by poly(A)-binding protein pab1. PAN deadenylation is followed by rapid degradation of the shortened mRNA tails by the CCR4-NOT complex. Deadenylated mRNAs are then degraded by two alternative mechanisms, namely exosome-mediated 3'-5' exonucleolytic degradation, or deadenylation-dependent mRNA decaping and subsequent 5'-3' exonucleolytic degradation by xrn1. May also be involved in post-transcriptional maturation of mRNA poly(A) tails. pan3 acts as a positive regulator for PAN activity, recruiting the catalytic subunit pan2 to mRNA via its interaction with RNA and with pab1. The polypeptide is PAN2-PAN3 deadenylation complex subunit PAN3 (Neosartorya fischeri (strain ATCC 1020 / DSM 3700 / CBS 544.65 / FGSC A1164 / JCM 1740 / NRRL 181 / WB 181) (Aspergillus fischerianus)).